Here is a 225-residue protein sequence, read N- to C-terminus: Ribonuclease HII (225 aa).

The RNase H type-2 domain maps to 2 to 210 (GIVVGVDEAG…VRKLGGPWRS (209 aa)). Residues D8, E9, and D107 each contribute to the a divalent metal cation site.

It belongs to the RNase HII family. Requires Mn(2+) as cofactor. It depends on Mg(2+) as a cofactor.

It is found in the cytoplasm. It catalyses the reaction Endonucleolytic cleavage to 5'-phosphomonoester.. Functionally, endonuclease that specifically degrades the RNA of RNA-DNA hybrids. In Aeropyrum pernix (strain ATCC 700893 / DSM 11879 / JCM 9820 / NBRC 100138 / K1), this protein is Ribonuclease HII (rnhB).